Here is a 180-residue protein sequence, read N- to C-terminus: RNA polymerase sigma-E factor (180 aa).

Positions 36 to 49 (DLLQTALARTYGRW) match the Polymerase core binding motif. Positions 130 to 149 (TEETAAALGMSAGTVKSTLH) form a DNA-binding region, H-T-H motif.

Belongs to the sigma-70 factor family. ECF subfamily.

It is found in the cytoplasm. In terms of biological role, sigma factors are initiation factors that promote the attachment of RNA polymerase to specific initiation sites and are then released. This sigma factor is required for the synthesis of the antibiotic actinomycin. This chain is RNA polymerase sigma-E factor (sigE), found in Streptomyces antibioticus.